The following is a 303-amino-acid chain: MSLILFACVVRVRDGLPLSASTDFYHSQDFLECRRRLKTLALRLAQYPGRGSAEGCDFSIHFSSSRDVACMAICSLQCPAAMAFCFLETLWWEFTASYDTTCVGLASRPYAFLEFDNVIQKVKWHFNYVSSTQMDSSLGKIQEELKFQPPVVLTLEDTDVANGVMNGHTLMHLEPAPSFRMEPVTALGILSLILNIMCAALNLIRGIHLAEHSLQVAHEEIGNILAFLIPFVACIFQCYLYLFYSPARTMKVVLMLLFICLGNVYLHGLRNLWQILFHIGVAFLSSHQILTRQLQDKQSDCGV.

Residues methionine 1–proline 183 lie on the Cytoplasmic side of the membrane. In terms of domain architecture, Longin spans cysteine 8–isoleucine 119. The helical transmembrane segment at valine 184–isoleucine 204 threads the bilayer. At arginine 205–asparagine 223 the chain is on the lumenal side. Residues isoleucine 224–tyrosine 244 traverse the membrane as a helical segment. The Cytoplasmic portion of the chain corresponds to serine 245 to arginine 248. The helical transmembrane segment at threonine 249–leucine 269 threads the bilayer. A topological domain (lumenal) is located at residue arginine 270. Residues asparagine 271 to threonine 291 traverse the membrane as a helical segment. Over arginine 292–valine 303 the chain is Cytoplasmic.

This sequence belongs to the synaptobrevin family.

It localises to the endoplasmic reticulum membrane. May be involved in vesicle transport between the ER and the Golgi complex. The polypeptide is Vesicle-trafficking protein SEC22c (SEC22C) (Bos taurus (Bovine)).